Consider the following 181-residue polypeptide: Adenine phosphoribosyltransferase (181 aa).

Belongs to the purine/pyrimidine phosphoribosyltransferase family. In terms of assembly, homodimer.

The protein localises to the cytoplasm. It catalyses the reaction AMP + diphosphate = 5-phospho-alpha-D-ribose 1-diphosphate + adenine. It participates in purine metabolism; AMP biosynthesis via salvage pathway; AMP from adenine: step 1/1. Functionally, catalyzes a salvage reaction resulting in the formation of AMP, that is energically less costly than de novo synthesis. This Cytophaga hutchinsonii (strain ATCC 33406 / DSM 1761 / CIP 103989 / NBRC 15051 / NCIMB 9469 / D465) protein is Adenine phosphoribosyltransferase.